Reading from the N-terminus, the 486-residue chain is Glutamyl-tRNA(Gln) amidotransferase subunit A (486 aa).

Active-site charge relay system residues include lysine 78 and serine 153. Residue serine 177 is the Acyl-ester intermediate of the active site.

Belongs to the amidase family. GatA subfamily. In terms of assembly, heterotrimer of A, B and C subunits.

The enzyme catalyses L-glutamyl-tRNA(Gln) + L-glutamine + ATP + H2O = L-glutaminyl-tRNA(Gln) + L-glutamate + ADP + phosphate + H(+). In terms of biological role, allows the formation of correctly charged Gln-tRNA(Gln) through the transamidation of misacylated Glu-tRNA(Gln) in organisms which lack glutaminyl-tRNA synthetase. The reaction takes place in the presence of glutamine and ATP through an activated gamma-phospho-Glu-tRNA(Gln). This Syntrophobacter fumaroxidans (strain DSM 10017 / MPOB) protein is Glutamyl-tRNA(Gln) amidotransferase subunit A.